Here is a 296-residue protein sequence, read N- to C-terminus: GTPase Era (296 aa).

The region spanning 7–174 is the Era-type G domain; the sequence is KCSMNAIVGT…INYLCEISPS (168 aa). A G1 region spans residues 15–22; sequence GTTNAGKS. 15-22 is a GTP binding site; that stretch reads GTTNAGKS. The interval 41–45 is G2; that stretch reads QTTRV. A G3 region spans residues 62–65; it reads DTPG. GTP-binding positions include 62 to 66 and 124 to 127; these read DTPGI and NKID. The G4 stretch occupies residues 124-127; that stretch reads NKID. Positions 153-155 are G5; that stretch reads ISA. The KH type-2 domain occupies 205 to 282; that stretch reads LHHELPYSLS…HLFLFVKVRE (78 aa).

This sequence belongs to the TRAFAC class TrmE-Era-EngA-EngB-Septin-like GTPase superfamily. Era GTPase family. In terms of assembly, monomer.

Its subcellular location is the cytoplasm. It localises to the cell inner membrane. In terms of biological role, an essential GTPase that binds both GDP and GTP, with rapid nucleotide exchange. Plays a role in 16S rRNA processing and 30S ribosomal subunit biogenesis and possibly also in cell cycle regulation and energy metabolism. In Ehrlichia canis (strain Jake), this protein is GTPase Era.